Reading from the N-terminus, the 251-residue chain is Probable phosphatase Sputw3181_2734 (251 aa).

His8, His10, His16, His41, Glu74, His102, His132, Asp193, and His195 together coordinate Zn(2+).

It belongs to the PHP family. The cofactor is Zn(2+).

The sequence is that of Probable phosphatase Sputw3181_2734 from Shewanella sp. (strain W3-18-1).